Consider the following 32-residue polypeptide: Beta-1,4-galactosyltransferase 1 (32 aa).

This sequence belongs to the glycosyltransferase 7 family. It depends on Mn(2+) as a cofactor. The soluble form derives from the membrane form by proteolytic processing.

It is found in the golgi apparatus. The protein localises to the golgi stack membrane. Its subcellular location is the secreted. The protein resides in the cell membrane. It localises to the cell projection. It is found in the filopodium. The enzyme catalyses D-glucose + UDP-alpha-D-galactose = lactose + UDP + H(+). It catalyses the reaction an N-acetyl-beta-D-glucosaminyl derivative + UDP-alpha-D-galactose = a beta-D-galactosyl-(1-&gt;4)-N-acetyl-beta-D-glucosaminyl derivative + UDP + H(+). It carries out the reaction N-acetyl-D-glucosamine + UDP-alpha-D-galactose = beta-D-galactosyl-(1-&gt;4)-N-acetyl-D-glucosamine + UDP + H(+). The catalysed reaction is a beta-D-GlcNAc-(1-&gt;3)-beta-D-Gal-(1-&gt;4)-beta-D-Glc-(1&lt;-&gt;1)-Cer(d18:1(4E)) + UDP-alpha-D-galactose = a neolactoside nLc4Cer(d18:1(4E)) + UDP + H(+). The enzyme catalyses a beta-D-glucosylceramide + UDP-alpha-D-galactose = a beta-D-galactosyl-(1-&gt;4)-beta-D-glucosyl-(1&lt;-&gt;1)-ceramide + UDP + H(+). It catalyses the reaction a neolactoside IV(3)-beta-GlcNAc-nLc4Cer + UDP-alpha-D-galactose = a neolactoside nLc6Cer + UDP + H(+). It participates in protein modification; protein glycosylation. Its function is as follows. This protein is responsible for the synthesis of complex-type N-linked oligosaccharides in many glycoproteins as well as the carbohydrate moieties of glycolipids. The protein is Beta-1,4-galactosyltransferase 1 of Rattus norvegicus (Rat).